Reading from the N-terminus, the 248-residue chain is UDP-2,3-diacylglucosamine hydrolase (248 aa).

Asp7, His9, Asp40, Asn78, and His113 together coordinate Mn(2+). 78-79 (NR) contacts substrate. Asp121, Ser159, Thr163, Lys166, and His194 together coordinate substrate. His194 and His196 together coordinate Mn(2+).

Belongs to the LpxH family. The cofactor is Mn(2+).

It localises to the cell inner membrane. The enzyme catalyses UDP-2-N,3-O-bis[(3R)-3-hydroxytetradecanoyl]-alpha-D-glucosamine + H2O = 2-N,3-O-bis[(3R)-3-hydroxytetradecanoyl]-alpha-D-glucosaminyl 1-phosphate + UMP + 2 H(+). Its pathway is glycolipid biosynthesis; lipid IV(A) biosynthesis; lipid IV(A) from (3R)-3-hydroxytetradecanoyl-[acyl-carrier-protein] and UDP-N-acetyl-alpha-D-glucosamine: step 4/6. In terms of biological role, hydrolyzes the pyrophosphate bond of UDP-2,3-diacylglucosamine to yield 2,3-diacylglucosamine 1-phosphate (lipid X) and UMP by catalyzing the attack of water at the alpha-P atom. Involved in the biosynthesis of lipid A, a phosphorylated glycolipid that anchors the lipopolysaccharide to the outer membrane of the cell. The sequence is that of UDP-2,3-diacylglucosamine hydrolase from Pseudomonas syringae pv. tomato (strain ATCC BAA-871 / DC3000).